Reading from the N-terminus, the 886-residue chain is MDLSDSPKGIETHTPMMQQYLRIKADHPDTLVFYRMGDFYELFFEDAEKAARLLDLTLTQRGASAGNPIKMAGVPHHAVEQYLAKLVKMGESVAICEQIGDPATSKGPVERKVVRVVTPGTLTDAALLSDKNDVYLLAMYTGHNKRGVAVNIGLAWLNLASGALRLAEIEPDQLGAALERIRPAEILTADGATDAVPAGAGAVKRVPAWHFDIASGTQRLCDQLDVAGLDGFGAHSLTSACGAAGALLLYAAATQGQQLRHVRSLKVESETEYIGLDPATRRNLELTETLRGTESPTLYSLLDTCCTTMGSRLLRHWLHHPPRASVAAQSRQQAIGALLDAPADANLDALRSALRQIADVERITGRLALLSARPRDLSSLRDTFAALPALRERISAIVANADALARVDAALAPPAECLDLLTSAIAPEPAAMVRDGGVIARGYDAELDELRDISENCGQFLIDLEARERARTGIANLRVEYNKVHGFYIEVTRGQTDKVPDDYRRRQTLKNAERYITPELKTFEDKALSAQERALARERALYDGVLQALLPFIPECQRVASALAELDVLAAFAERARTLDWVAPTFTDDIGIEIEQGRHPVVEAQVEQFIANDCRFGADRKLLLITGPNMGGKSTFMRQTALIALMAYVGSYVPAKSACFGPIDRIFTRIGAADDLAGGRSTFMVEMTEAAAILNDATPQSLVLMDEIGRGTSTFDGLALAWAIARHLLAQNGCYTLFATHYFELTQLPSEFPQAANVHLSAVEHGHGIVFLHAVNEGPANQSYGLQVAQLAGVPAPVIRAARKHLAYLEQQSAAQHTPQLDLFSAPPAAADDVECADAPAPSDATHPALDRLRDIDPDDLKPREALDLLYELRTLVRSHDADGHA.

An ATP-binding site is contributed by 627–634; the sequence is GPNMGGKS. The interval 834-857 is disordered; sequence VECADAPAPSDATHPALDRLRDID.

Belongs to the DNA mismatch repair MutS family.

This protein is involved in the repair of mismatches in DNA. It is possible that it carries out the mismatch recognition step. This protein has a weak ATPase activity. This Burkholderia vietnamiensis (strain G4 / LMG 22486) (Burkholderia cepacia (strain R1808)) protein is DNA mismatch repair protein MutS.